The chain runs to 341 residues: UDP-3-O-acylglucosamine N-acyltransferase (341 aa).

Histidine 240 (proton acceptor) is an active-site residue.

The protein belongs to the transferase hexapeptide repeat family. LpxD subfamily. In terms of assembly, homotrimer.

It carries out the reaction a UDP-3-O-[(3R)-3-hydroxyacyl]-alpha-D-glucosamine + a (3R)-hydroxyacyl-[ACP] = a UDP-2-N,3-O-bis[(3R)-3-hydroxyacyl]-alpha-D-glucosamine + holo-[ACP] + H(+). Its pathway is bacterial outer membrane biogenesis; LPS lipid A biosynthesis. Its function is as follows. Catalyzes the N-acylation of UDP-3-O-acylglucosamine using 3-hydroxyacyl-ACP as the acyl donor. Is involved in the biosynthesis of lipid A, a phosphorylated glycolipid that anchors the lipopolysaccharide to the outer membrane of the cell. The chain is UDP-3-O-acylglucosamine N-acyltransferase from Cellvibrio japonicus (strain Ueda107) (Pseudomonas fluorescens subsp. cellulosa).